Consider the following 272-residue polypeptide: Shikimate dehydrogenase (NADP(+)) (272 aa).

Residues 14 to 16 (SKS) and T61 contribute to the shikimate site. Catalysis depends on K65, which acts as the Proton acceptor. Residue E77 participates in NADP(+) binding. Residues N86 and D102 each coordinate shikimate. Residues 126–130 (GAGGA), 149–154 (NRTVSR), and M213 contribute to the NADP(+) site. Y215 is a shikimate binding site. G237 is a binding site for NADP(+).

The protein belongs to the shikimate dehydrogenase family. As to quaternary structure, homodimer.

The enzyme catalyses shikimate + NADP(+) = 3-dehydroshikimate + NADPH + H(+). Its pathway is metabolic intermediate biosynthesis; chorismate biosynthesis; chorismate from D-erythrose 4-phosphate and phosphoenolpyruvate: step 4/7. Its function is as follows. Involved in the biosynthesis of the chorismate, which leads to the biosynthesis of aromatic amino acids. Catalyzes the reversible NADPH linked reduction of 3-dehydroshikimate (DHSA) to yield shikimate (SA). This chain is Shikimate dehydrogenase (NADP(+)), found in Shigella boydii serotype 4 (strain Sb227).